Consider the following 634-residue polypeptide: Chaperone protein HtpG (634 aa).

Residues 1–344 (MNETVANNKE…SNDLPLNVSR (344 aa)) form an a; substrate-binding region. Positions 345–561 (EILQDNKVTQ…DFEMGTQMAK (217 aa)) are b. Residues 562–634 (LLAAAGQAVP…TAINSLLTKG (73 aa)) form a c region.

The protein belongs to the heat shock protein 90 family. Homodimer.

It localises to the cytoplasm. Its function is as follows. Molecular chaperone. Has ATPase activity. This chain is Chaperone protein HtpG, found in Vibrio vulnificus (strain CMCP6).